The chain runs to 199 residues: Molybdenum cofactor guanylyltransferase (199 aa).

GTP is bound by residues 12-14, K25, N53, D71, and D101; that span reads LAG. D101 is a Mg(2+) binding site.

The protein belongs to the MobA family. In terms of assembly, monomer. Mg(2+) is required as a cofactor.

The protein resides in the cytoplasm. It carries out the reaction Mo-molybdopterin + GTP + H(+) = Mo-molybdopterin guanine dinucleotide + diphosphate. In terms of biological role, transfers a GMP moiety from GTP to Mo-molybdopterin (Mo-MPT) cofactor (Moco or molybdenum cofactor) to form Mo-molybdopterin guanine dinucleotide (Mo-MGD) cofactor. The chain is Molybdenum cofactor guanylyltransferase from Cupriavidus pinatubonensis (strain JMP 134 / LMG 1197) (Cupriavidus necator (strain JMP 134)).